Here is a 547-residue protein sequence, read N- to C-terminus: Putative cysteine ligase BshC (547 aa).

Positions 461-504 form a coiled coil; the sequence is ASTEATRSAIMDEMEALKQKVVRAEKRQQDEVRAQLKKAHTNLR.

This sequence belongs to the BshC family.

The chain is Putative cysteine ligase BshC from Salinibacter ruber (strain DSM 13855 / M31).